Consider the following 39-residue polypeptide: Cytochrome b559 subunit beta (39 aa).

A helical membrane pass occupies residues 14–30 (WLAVHGLAVPTVFFLGS). Residue His18 participates in heme binding.

It belongs to the PsbE/PsbF family. As to quaternary structure, heterodimer of an alpha subunit and a beta subunit. PSII is composed of 1 copy each of membrane proteins PsbA, PsbB, PsbC, PsbD, PsbE, PsbF, PsbH, PsbI, PsbJ, PsbK, PsbL, PsbM, PsbT, PsbX, PsbY, PsbZ, Psb30/Ycf12, at least 3 peripheral proteins of the oxygen-evolving complex and a large number of cofactors. It forms dimeric complexes. Requires heme b as cofactor.

It localises to the plastid. It is found in the chloroplast thylakoid membrane. Functionally, this b-type cytochrome is tightly associated with the reaction center of photosystem II (PSII). PSII is a light-driven water:plastoquinone oxidoreductase that uses light energy to abstract electrons from H(2)O, generating O(2) and a proton gradient subsequently used for ATP formation. It consists of a core antenna complex that captures photons, and an electron transfer chain that converts photonic excitation into a charge separation. In Gnetum gnemon (Spanish joint-fir), this protein is Cytochrome b559 subunit beta.